A 253-amino-acid chain; its full sequence is Imidazole glycerol phosphate synthase subunit HisF (253 aa).

Active-site residues include aspartate 11 and aspartate 130.

This sequence belongs to the HisA/HisF family. Heterodimer of HisH and HisF.

It localises to the cytoplasm. The catalysed reaction is 5-[(5-phospho-1-deoxy-D-ribulos-1-ylimino)methylamino]-1-(5-phospho-beta-D-ribosyl)imidazole-4-carboxamide + L-glutamine = D-erythro-1-(imidazol-4-yl)glycerol 3-phosphate + 5-amino-1-(5-phospho-beta-D-ribosyl)imidazole-4-carboxamide + L-glutamate + H(+). Its pathway is amino-acid biosynthesis; L-histidine biosynthesis; L-histidine from 5-phospho-alpha-D-ribose 1-diphosphate: step 5/9. In terms of biological role, IGPS catalyzes the conversion of PRFAR and glutamine to IGP, AICAR and glutamate. The HisF subunit catalyzes the cyclization activity that produces IGP and AICAR from PRFAR using the ammonia provided by the HisH subunit. The sequence is that of Imidazole glycerol phosphate synthase subunit HisF from Clostridium botulinum (strain Alaska E43 / Type E3).